The following is a 662-amino-acid chain: Rap guanine nucleotide exchange factor-like 1 (662 aa).

A disordered region spans residues 1-149 (MKPLEKFLKK…PPWAPLGAPE (149 aa)). Gly residues predominate over residues 20–48 (VAGGPGGGLGSCGGPGGGGGPGGGGGPAG). The span at 49–64 (GQRSLQRRQSVSRLLL) shows a compositional bias: low complexity. A compositionally biased stretch (pro residues) spans 73–82 (AEPGLEPPVP). Residues 120–135 (LRSPSSYSSDELSPGE) show a composition bias toward low complexity. Residues 424–660 (EPEDVANHLT…FELSYKLEAN (237 aa)) enclose the Ras-GEF domain.

Probable guanine nucleotide exchange factor (GEF). This Homo sapiens (Human) protein is Rap guanine nucleotide exchange factor-like 1 (RAPGEFL1).